A 502-amino-acid polypeptide reads, in one-letter code: Cytochrome P450 71B20 (502 aa).

Residues 1-21 (MAISFLCFCLITLASLIFFAK) form a helical membrane-spanning segment. Cys444 lines the heme pocket.

It belongs to the cytochrome P450 family. It depends on heme as a cofactor.

The protein localises to the membrane. In Arabidopsis thaliana (Mouse-ear cress), this protein is Cytochrome P450 71B20 (CYP71B20).